The following is a 287-amino-acid chain: Ribosomal RNA small subunit methyltransferase A (287 aa).

Residues 1–15 (MSKTTFDAQSITNSL) are compositionally biased toward polar residues. The segment at 1 to 20 (MSKTTFDAQSITNSLRAAKH) is disordered. Residues asparagine 29, leucine 31, glycine 56, glutamate 77, and asparagine 126 each contribute to the S-adenosyl-L-methionine site.

This sequence belongs to the class I-like SAM-binding methyltransferase superfamily. rRNA adenine N(6)-methyltransferase family. RsmA subfamily.

The protein resides in the cytoplasm. It carries out the reaction adenosine(1518)/adenosine(1519) in 16S rRNA + 4 S-adenosyl-L-methionine = N(6)-dimethyladenosine(1518)/N(6)-dimethyladenosine(1519) in 16S rRNA + 4 S-adenosyl-L-homocysteine + 4 H(+). Functionally, specifically dimethylates two adjacent adenosines (A1518 and A1519) in the loop of a conserved hairpin near the 3'-end of 16S rRNA in the 30S particle. May play a critical role in biogenesis of 30S subunits. The chain is Ribosomal RNA small subunit methyltransferase A from Psychrobacter cryohalolentis (strain ATCC BAA-1226 / DSM 17306 / VKM B-2378 / K5).